A 93-amino-acid polypeptide reads, in one-letter code: Small ribosomal subunit protein uS19 (93 aa).

It belongs to the universal ribosomal protein uS19 family.

In terms of biological role, protein S19 forms a complex with S13 that binds strongly to the 16S ribosomal RNA. The protein is Small ribosomal subunit protein uS19 of Kocuria rhizophila (strain ATCC 9341 / DSM 348 / NBRC 103217 / DC2201).